The following is a 283-amino-acid chain: ATP synthase gamma chain (283 aa).

This sequence belongs to the ATPase gamma chain family. As to quaternary structure, F-type ATPases have 2 components, CF(1) - the catalytic core - and CF(0) - the membrane proton channel. CF(1) has five subunits: alpha(3), beta(3), gamma(1), delta(1), epsilon(1). CF(0) has three main subunits: a, b and c.

It localises to the cell membrane. Produces ATP from ADP in the presence of a proton gradient across the membrane. The gamma chain is believed to be important in regulating ATPase activity and the flow of protons through the CF(0) complex. This chain is ATP synthase gamma chain, found in Clostridium beijerinckii (strain ATCC 51743 / NCIMB 8052) (Clostridium acetobutylicum).